The sequence spans 321 residues: Thylakoid-associated protein sll1697 (321 aa).

Its subcellular location is the cellular thylakoid membrane. The polypeptide is Thylakoid-associated protein sll1697 (Synechocystis sp. (strain ATCC 27184 / PCC 6803 / Kazusa)).